The following is a 301-amino-acid chain: Homoserine O-acetyltransferase (301 aa).

Residue Cys142 is the Acyl-thioester intermediate of the active site. Residues Lys163 and Ser192 each coordinate substrate. The active-site Proton acceptor is the His235. Glu237 is an active-site residue. Substrate is bound at residue Arg249.

This sequence belongs to the MetA family.

It localises to the cytoplasm. It catalyses the reaction L-homoserine + acetyl-CoA = O-acetyl-L-homoserine + CoA. Its pathway is amino-acid biosynthesis; L-methionine biosynthesis via de novo pathway; O-acetyl-L-homoserine from L-homoserine: step 1/1. In terms of biological role, transfers an acetyl group from acetyl-CoA to L-homoserine, forming acetyl-L-homoserine. This Bacillus mycoides (strain KBAB4) (Bacillus weihenstephanensis) protein is Homoserine O-acetyltransferase.